The sequence spans 492 residues: 3-octaprenyl-4-hydroxybenzoate carboxy-lyase (492 aa).

Mn(2+) is bound at residue asparagine 175. Prenylated FMN is bound by residues isoleucine 178–arginine 180, arginine 192–leucine 194, and arginine 197–glycine 198. Glutamate 241 is a Mn(2+) binding site. Aspartate 290 serves as the catalytic Proton donor.

Belongs to the UbiD family. In terms of assembly, homohexamer. Requires prenylated FMN as cofactor. The cofactor is Mn(2+).

The protein resides in the cell membrane. It catalyses the reaction a 4-hydroxy-3-(all-trans-polyprenyl)benzoate + H(+) = a 2-(all-trans-polyprenyl)phenol + CO2. The protein operates within cofactor biosynthesis; ubiquinone biosynthesis. In terms of biological role, catalyzes the decarboxylation of 3-octaprenyl-4-hydroxy benzoate to 2-octaprenylphenol, an intermediate step in ubiquinone biosynthesis. This Salmonella paratyphi A (strain ATCC 9150 / SARB42) protein is 3-octaprenyl-4-hydroxybenzoate carboxy-lyase.